The sequence spans 154 residues: CASP-like protein 5B3 (154 aa).

Topologically, residues 1 to 17 are cytoplasmic; it reads MKDVVGSPGTWSGMSLR. Residues 18–38 traverse the membrane as a helical segment; that stretch reads VSQCVFAGASVVAMASAYGFS. Asparagine 39 carries an N-linked (GlcNAc...) asparagine glycan. The Extracellular portion of the chain corresponds to 39–42; that stretch reads NYTA. A helical transmembrane segment spans residues 43–63; it reads FCYLIASMGLQLLWSFGLACL. At 64 to 77 the chain is on the cytoplasmic side; that stretch reads DIYSLQTKRDLHNP. Residues 78–98 traverse the membrane as a helical segment; it reads VLVSLFVVGDWVTAILSFAAA. Topologically, residues 99-129 are extracellular; that stretch reads SASAGVTILFERDVHFCRMYPQLSCGRYELS. The helical transmembrane segment at 130 to 150 threads the bilayer; it reads VILAFITWSFIATSAVSMFWL. Residues 151-154 are Cytoplasmic-facing; it reads LASL.

The protein belongs to the Casparian strip membrane proteins (CASP) family. Homodimer and heterodimers.

The protein resides in the cell membrane. In Oryza sativa subsp. indica (Rice), this protein is CASP-like protein 5B3.